The following is a 298-amino-acid chain: Protoheme IX farnesyltransferase 1 (298 aa).

9 helical membrane-spanning segments follow: residues 21–41 (QVWWLLVFIGLIGSILAINSF), 43–63 (SYLIILLLVALVANMTGSMGA), 94–114 (KGAFLFGIILSLFSIFILLIF), 118–138 (LAALFMFLGLFDNVFIYSYLL), 144–164 (YSIILGGFSGAFPVLIGWYTV), 168–188 (FSWIPFILFFLVMFWIPVHVW), 215–235 (TAVSISLSSMLLILFSVIPYF), 236–256 (LGFFNYLYLLVILILSVPIVI), and 274–294 (FIYTAPYLTFVFFIVMIIHII).

It belongs to the UbiA prenyltransferase family. Protoheme IX farnesyltransferase subfamily.

Its subcellular location is the cell membrane. The catalysed reaction is heme b + (2E,6E)-farnesyl diphosphate + H2O = Fe(II)-heme o + diphosphate. Its pathway is porphyrin-containing compound metabolism; heme O biosynthesis; heme O from protoheme: step 1/1. In terms of biological role, converts heme B (protoheme IX) to heme O by substitution of the vinyl group on carbon 2 of heme B porphyrin ring with a hydroxyethyl farnesyl side group. This chain is Protoheme IX farnesyltransferase 1, found in Picrophilus torridus (strain ATCC 700027 / DSM 9790 / JCM 10055 / NBRC 100828 / KAW 2/3).